The primary structure comprises 404 residues: Cysteine desulfurase IscS (404 aa).

Residues 75–76, asparagine 155, glutamine 183, and 203–205 each bind pyridoxal 5'-phosphate; these read AT and SAH. Position 206 is an N6-(pyridoxal phosphate)lysine (lysine 206). Threonine 243 is a pyridoxal 5'-phosphate binding site. The active-site Cysteine persulfide intermediate is cysteine 328. [2Fe-2S] cluster is bound at residue cysteine 328.

Belongs to the class-V pyridoxal-phosphate-dependent aminotransferase family. NifS/IscS subfamily. Homodimer. Forms a heterotetramer with IscU, interacts with other sulfur acceptors. Pyridoxal 5'-phosphate is required as a cofactor.

The protein localises to the cytoplasm. It catalyses the reaction (sulfur carrier)-H + L-cysteine = (sulfur carrier)-SH + L-alanine. The protein operates within cofactor biosynthesis; iron-sulfur cluster biosynthesis. In terms of biological role, master enzyme that delivers sulfur to a number of partners involved in Fe-S cluster assembly, tRNA modification or cofactor biosynthesis. Catalyzes the removal of elemental sulfur atoms from cysteine to produce alanine. Functions as a sulfur delivery protein for Fe-S cluster synthesis onto IscU, an Fe-S scaffold assembly protein, as well as other S acceptor proteins. This chain is Cysteine desulfurase IscS, found in Shewanella woodyi (strain ATCC 51908 / MS32).